The following is a 456-amino-acid chain: Cell adhesion molecule 1 (456 aa).

The N-terminal stretch at 1–47 is a signal peptide; the sequence is MASAVLPSGSQCAAAAAVAAAAAPPGLRLRLLLLLLSAAALIPTGDG. Residues 48–142 form the Ig-like V-type domain; the sequence is QNLFTKDVTV…PPQESYTTIT (95 aa). At 48 to 388 the chain is on the extracellular side; that stretch reads QNLFTKDVTV…EEGTIGAVDH (341 aa). Cysteines 67 and 127 form a disulfide. 4 N-linked (GlcNAc...) asparagine glycosylation sites follow: Asn70, Asn104, Asn116, and Asn168. Ig-like C2-type domains lie at 147-241 and 246-332; these read PRNL…RYLE and PQVH…YMLY. Intrachain disulfides connect Cys169/Cys223 and Cys270/Cys316. Asn307 and Asn311 each carry an N-linked (GlcNAc...) asparagine glycan. Residues 389–409 traverse the membrane as a helical segment; it reads AVIGGVVAVVVFAMLCLLIIL. Topologically, residues 410 to 456 are cytoplasmic; that stretch reads GRYFARHKGTYFTHEAKGADDAADADTAIINAEGGQNNSEEKKEYFI. Thr436 carries the post-translational modification Phosphothreonine. Residue Ser448 is modified to Phosphoserine.

It belongs to the nectin family. Homodimer (via Ig-like V-type domain). Interacts with FARP1. Interacts (via Ig-like V-type domain) with CRTAM (via Ig-like V-type domain); the interaction competes with CRTAM homodimerization and CADM1 homodimerization. Interacts (via C-terminus) with EPB41L3/DAL1. The interaction with EPB41L3/DAL1 may act to anchor CADM1 to the actin cytoskeleton. Interacts (via C-terminus) with MPP2 (via PDZ domain). Interacts (via C-terminus) with MPP3 (via PDZ domain); this interaction connects CADM1 with DLG1. Interacts (via C-terminus) with PALS2 (via PDZ domain). Post-translationally, N-glycosylated. Glycosylation at Asn-70 and Asn-104 promotes adhesive binding and synapse induction. Expressed dominantly in epithelial cells but not expressed in fibroblast cells (at protein level). Expressed in the T-cell area of lymph nodes, specifically in CD8+ and CD4- CD8- dendritic cells (at protein level). Expressed in CD8+ dendritic cells in the spleen (at protein level). Expressed in CD103+ dendritic cells in the small intestine lamina propria and mesenteric lymph nodes (at protein level). Expressed in brain, lung, kidney, testis, heart, spleen and liver, but not expressed in skeletal muscle.

It is found in the cell membrane. The protein localises to the synaptic cell membrane. Mediates homophilic cell-cell adhesion in a Ca(2+)-independent manner. Also mediates heterophilic cell-cell adhesion with CADM3 and NECTIN3 in a Ca(2+)-independent manner. Interaction with CRTAM promotes natural killer (NK) cell cytotoxicity and interferon-gamma (IFN-gamma) secretion by CD8+ T-cells in vitro as well as NK cell-mediated rejection of tumors expressing CADM1 in vivo. In mast cells, may mediate attachment to and promote communication with nerves. CADM1, together with MITF, is essential for development and survival of mast cells in vivo. By interacting with CRTAM and thus promoting the adhesion between CD8+ T-cells and CD8+ dendritic cells, regulates the retention of activated CD8+ T-cell within the draining lymph node. Required for the intestinal retention of intraepithelial CD4+ CD8+ T-cells and, to a lesser extent, intraepithelial and lamina propria CD8+ T-cells and CD4+ T-cells. Interaction with CRTAM promotes the adhesion to gut-associated CD103+ dendritic cells, which may facilitate the expression of gut-homing and adhesion molecules on T-cells and the conversion of CD4+ T-cells into CD4+ CD8+ T-cells. Acts as a synaptic cell adhesion molecule and plays a role in the formation of dendritic spines and in synapse assembly. May be involved in neuronal migration, axon growth, pathfinding, and fasciculation on the axons of differentiating neurons. May play diverse roles in the spermatogenesis including in the adhesion of spermatocytes and spermatids to Sertoli cells and for their normal differentiation into mature spermatozoa. This is Cell adhesion molecule 1 from Mus musculus (Mouse).